A 941-amino-acid chain; its full sequence is Translation initiation factor IF-2 (941 aa).

Disordered regions lie at residues 61-204 (IQSN…RREN) and 249-274 (QEKD…KNNK). Residues 147–163 (EKAKQKLQEIQKSREAL) show a composition bias toward basic and acidic residues. The span at 164–179 (NKLTQSNTNNANNANS) shows a compositional bias: low complexity. The segment covering 180–204 (AKKEISEVAKQEREQEHLDNKRREN) has biased composition (basic and acidic residues). A tr-type G domain is found at 440 to 609 (ERPPVVTIMG…LIQADIMELK (170 aa)). A G1 region spans residues 449 to 456 (GHVDHGKT). 449–456 (GHVDHGKT) contributes to the GTP binding site. The segment at 474 to 478 (GITQH) is G2. The interval 495 to 498 (DTPG) is G3. GTP-binding positions include 495–499 (DTPGH) and 549–552 (NKMD). Positions 549–552 (NKMD) are G4. Positions 585-587 (SAK) are G5.

The protein belongs to the TRAFAC class translation factor GTPase superfamily. Classic translation factor GTPase family. IF-2 subfamily.

It localises to the cytoplasm. Its function is as follows. One of the essential components for the initiation of protein synthesis. Protects formylmethionyl-tRNA from spontaneous hydrolysis and promotes its binding to the 30S ribosomal subunits. Also involved in the hydrolysis of GTP during the formation of the 70S ribosomal complex. This Helicobacter acinonychis (strain Sheeba) protein is Translation initiation factor IF-2.